Reading from the N-terminus, the 373-residue chain is Inhibitor of nuclear factor kappa-B kinase-interacting protein (373 aa).

Residues 1-11 (MSEVKSRKKPG) show a composition bias toward basic residues. The segment at 1–38 (MSEVKSRKKPGPKVAAPEPEKRSDGRKNPEARGGAGWA) is disordered. The span at 18–30 (EPEKRSDGRKNPE) shows a compositional bias: basic and acidic residues. Residues 43-59 (GLSLLSLATSLGLAWLV) form a helical membrane-spanning segment. Coiled coils occupy residues 64 to 257 (EKFA…DKLS) and 290 to 325 (TERK…LEGI). N-linked (GlcNAc...) asparagine glycosylation is present at asparagine 151.

Post-translationally, N-glycosylated at Asn-151.

Its subcellular location is the endoplasmic reticulum membrane. Functionally, target of p53/TP53 with pro-apoptotic function. The sequence is that of Inhibitor of nuclear factor kappa-B kinase-interacting protein (Ikbip) from Rattus norvegicus (Rat).